We begin with the raw amino-acid sequence, 421 residues long: ATP-dependent RNA helicase RhlB (421 aa).

Residues 9–37 (QKFSDFALHPKVVEALEKKGFHNCTPIQA) carry the Q motif motif. A Helicase ATP-binding domain is found at 40 to 219 (LPLTLAGRDV…FEQMNNAEYI (180 aa)). Residue 53-60 (AQTGTGKT) coordinates ATP. The DEAD box signature appears at 165-168 (DEAD). In terms of domain architecture, Helicase C-terminal spans 245-390 (RLLQTLIEEE…VSKYNPDALM (146 aa)). The tract at residues 395 to 421 (KPLRLTRARTGNGPRRTGAPRNRRRSG) is disordered. Residues 402 to 414 (ARTGNGPRRTGAP) are compositionally biased toward low complexity.

It belongs to the DEAD box helicase family. RhlB subfamily. As to quaternary structure, component of the RNA degradosome, which is a multiprotein complex involved in RNA processing and mRNA degradation.

Its subcellular location is the cytoplasm. It carries out the reaction ATP + H2O = ADP + phosphate + H(+). Functionally, DEAD-box RNA helicase involved in RNA degradation. Has RNA-dependent ATPase activity and unwinds double-stranded RNA. The chain is ATP-dependent RNA helicase RhlB from Shigella flexneri serotype 5b (strain 8401).